A 166-amino-acid polypeptide reads, in one-letter code: MSKVIEMKEKVVAEITEKFEKSIAAVVVDYRGLKVEEVTELRAKFREAGVEYKVYKNTMMRRAARNAGMEEMVADLVGPNAVAFSYEDPVAPARILNDFAKNHKALELKVGFVEGSFYDEEKLKELASVPSREVLIAKLLSSFNAPMANFACLIKAIADKKTEQEA.

It belongs to the universal ribosomal protein uL10 family. In terms of assembly, part of the ribosomal stalk of the 50S ribosomal subunit. The N-terminus interacts with L11 and the large rRNA to form the base of the stalk. The C-terminus forms an elongated spine to which L12 dimers bind in a sequential fashion forming a multimeric L10(L12)X complex.

Functionally, forms part of the ribosomal stalk, playing a central role in the interaction of the ribosome with GTP-bound translation factors. The protein is Large ribosomal subunit protein uL10 of Alkaliphilus metalliredigens (strain QYMF).